A 231-amino-acid polypeptide reads, in one-letter code: Probable septum site-determining protein MinC (231 aa).

The interval 102-125 (KEKAPRPAPAPQAPAQNTTPVTKT) is disordered.

It belongs to the MinC family. Interacts with MinD and FtsZ.

Cell division inhibitor that blocks the formation of polar Z ring septums. Rapidly oscillates between the poles of the cell to destabilize FtsZ filaments that have formed before they mature into polar Z rings. Prevents FtsZ polymerization. The protein is Probable septum site-determining protein MinC of Escherichia coli O6:K15:H31 (strain 536 / UPEC).